The chain runs to 35 residues: LRIPCCPVNLKRLLVVVVVVVLVVVVIVGALLMGL.

Residues cysteine 5 and cysteine 6 are each lipidated (S-palmitoyl cysteine).

It localises to the secreted. Its subcellular location is the extracellular space. It is found in the surface film. Functionally, pulmonary surfactant associated proteins promote alveolar stability by lowering the surface tension at the air-liquid interface in the peripheral air spaces. The protein is Surfactant protein C (SFTPC) of Sus scrofa (Pig).